A 316-amino-acid chain; its full sequence is Ribosomal RNA small subunit methyltransferase H (316 aa).

S-adenosyl-L-methionine is bound by residues Ser-35 to His-37, Asp-55, Phe-84, Asp-105, and Gln-112.

Belongs to the methyltransferase superfamily. RsmH family.

The protein resides in the cytoplasm. It carries out the reaction cytidine(1402) in 16S rRNA + S-adenosyl-L-methionine = N(4)-methylcytidine(1402) in 16S rRNA + S-adenosyl-L-homocysteine + H(+). Specifically methylates the N4 position of cytidine in position 1402 (C1402) of 16S rRNA. The sequence is that of Ribosomal RNA small subunit methyltransferase H from Streptococcus equi subsp. equi (strain 4047).